A 581-amino-acid polypeptide reads, in one-letter code: Proline--tRNA ligase (581 aa).

Belongs to the class-II aminoacyl-tRNA synthetase family. ProS type 1 subfamily. As to quaternary structure, homodimer.

The protein resides in the cytoplasm. The enzyme catalyses tRNA(Pro) + L-proline + ATP = L-prolyl-tRNA(Pro) + AMP + diphosphate. In terms of biological role, catalyzes the attachment of proline to tRNA(Pro) in a two-step reaction: proline is first activated by ATP to form Pro-AMP and then transferred to the acceptor end of tRNA(Pro). As ProRS can inadvertently accommodate and process non-cognate amino acids such as alanine and cysteine, to avoid such errors it has two additional distinct editing activities against alanine. One activity is designated as 'pretransfer' editing and involves the tRNA(Pro)-independent hydrolysis of activated Ala-AMP. The other activity is designated 'posttransfer' editing and involves deacylation of mischarged Ala-tRNA(Pro). The misacylated Cys-tRNA(Pro) is not edited by ProRS. This Blochmanniella floridana protein is Proline--tRNA ligase.